Here is a 246-residue protein sequence, read N- to C-terminus: Heavy metal-associated isoprenylated plant protein 8 (246 aa).

The disordered stretch occupies residues 1 to 31 (MGKNKQNGESDNKSEKKNQKNGDSSVDKSDK). Positions 35–99 (CKEIVLKVYM…RVQKKFSRNA (65 aa)) constitute an HMA 1 domain. Residues Cys46 and Cys49 each coordinate a metal cation. The disordered stretch occupies residues 96–122 (SRNAEMISPKHNPKQDQKEPQQKKESA). Positions 108-122 (PKQDQKEPQQKKESA) are enriched in basic and acidic residues. Positions 125 to 189 (IKTAILRMNM…IKKKLGKHAE (65 aa)) constitute an HMA 2 domain. The a metal cation site is built by Cys136 and Cys139. Residues 191 to 226 (LSQITEKGKDNNKKNNNKKEESDGNKIFSYPPQYSS) are disordered. The segment covering 196–214 (EKGKDNNKKNNNKKEESDG) has biased composition (basic and acidic residues). Residue Cys243 is modified to Cysteine methyl ester. Residue Cys243 is the site of S-farnesyl cysteine attachment. The propeptide at 244–246 (SIM) is removed in mature form.

Belongs to the HIPP family.

Functionally, heavy-metal-binding protein. The chain is Heavy metal-associated isoprenylated plant protein 8 from Arabidopsis thaliana (Mouse-ear cress).